We begin with the raw amino-acid sequence, 243 residues long: Small ribosomal subunit protein uS5 (243 aa).

2 stretches are compositionally biased toward basic and acidic residues: residues methionine 1–lysine 21 and leucine 34–glycine 46. The interval methionine 1–proline 85 is disordered. Residues phenylalanine 89–valine 152 enclose the S5 DRBM domain.

It belongs to the universal ribosomal protein uS5 family. Part of the 30S ribosomal subunit. Contacts proteins S4 and S8.

With S4 and S12 plays an important role in translational accuracy. Functionally, located at the back of the 30S subunit body where it stabilizes the conformation of the head with respect to the body. This Mycoplasma mobile (strain ATCC 43663 / 163K / NCTC 11711) (Mesomycoplasma mobile) protein is Small ribosomal subunit protein uS5.